We begin with the raw amino-acid sequence, 568 residues long: Protein KATNIP homolog (568 aa).

Basic and acidic residues predominate over residues methionine 1–proline 20. The segment at methionine 1–glutamine 30 is disordered. Positions alanine 21–glutamine 30 are enriched in acidic residues.

Expressed in most ciliated neuronal cells. Not expressed in non-ciliated cells.

The protein localises to the cytoplasm. It localises to the cytoskeleton. The protein resides in the cilium axoneme. Its subcellular location is the cilium basal body. May regulate ciliary A-tubule number and, along with arl-13, controls cilium integrity. The polypeptide is Protein KATNIP homolog (Caenorhabditis elegans).